The primary structure comprises 91 residues: Small ribosomal subunit protein uS15c (91 aa).

It belongs to the universal ribosomal protein uS15 family. In terms of assembly, part of the 30S ribosomal subunit.

Its subcellular location is the plastid. It localises to the chloroplast. This Adiantum capillus-veneris (Maidenhair fern) protein is Small ribosomal subunit protein uS15c (rps15).